The sequence spans 371 residues: Aminomethyltransferase (371 aa).

This sequence belongs to the GcvT family. In terms of assembly, the glycine cleavage system is composed of four proteins: P, T, L and H.

It carries out the reaction N(6)-[(R)-S(8)-aminomethyldihydrolipoyl]-L-lysyl-[protein] + (6S)-5,6,7,8-tetrahydrofolate = N(6)-[(R)-dihydrolipoyl]-L-lysyl-[protein] + (6R)-5,10-methylene-5,6,7,8-tetrahydrofolate + NH4(+). In terms of biological role, the glycine cleavage system catalyzes the degradation of glycine. This Leptospira interrogans serogroup Icterohaemorrhagiae serovar Lai (strain 56601) protein is Aminomethyltransferase.